The primary structure comprises 159 residues: Cytochrome c-type biogenesis protein CcmE (159 aa).

At Met-1 to Arg-8 the chain is on the cytoplasmic side. Residues Leu-9 to Ala-29 form a helical; Signal-anchor for type II membrane protein membrane-spanning segment. Topologically, residues Leu-30–Asn-159 are periplasmic. 2 residues coordinate heme: His-130 and Tyr-134.

This sequence belongs to the CcmE/CycJ family.

It is found in the cell inner membrane. Heme chaperone required for the biogenesis of c-type cytochromes. Transiently binds heme delivered by CcmC and transfers the heme to apo-cytochromes in a process facilitated by CcmF and CcmH. The chain is Cytochrome c-type biogenesis protein CcmE from Pseudoalteromonas translucida (strain TAC 125).